A 365-amino-acid chain; its full sequence is 3-dehydroquinate synthase (365 aa).

NAD(+) is bound by residues 106-110, 130-131, Lys142, Lys151, and 169-172; these read GVIGD, TT, and FFAT. Zn(2+) contacts are provided by Glu184, His247, and His264.

It belongs to the sugar phosphate cyclases superfamily. Dehydroquinate synthase family. Co(2+) serves as cofactor. Zn(2+) is required as a cofactor. It depends on NAD(+) as a cofactor.

Its subcellular location is the cytoplasm. It catalyses the reaction 7-phospho-2-dehydro-3-deoxy-D-arabino-heptonate = 3-dehydroquinate + phosphate. The protein operates within metabolic intermediate biosynthesis; chorismate biosynthesis; chorismate from D-erythrose 4-phosphate and phosphoenolpyruvate: step 2/7. Functionally, catalyzes the conversion of 3-deoxy-D-arabino-heptulosonate 7-phosphate (DAHP) to dehydroquinate (DHQ). The protein is 3-dehydroquinate synthase of Listeria monocytogenes serotype 4b (strain CLIP80459).